The chain runs to 175 residues: Peptide deformylase (175 aa).

Residues C98 and H140 each coordinate Fe cation. E141 is a catalytic residue. H144 serves as a coordination point for Fe cation.

This sequence belongs to the polypeptide deformylase family. Fe(2+) is required as a cofactor.

It carries out the reaction N-terminal N-formyl-L-methionyl-[peptide] + H2O = N-terminal L-methionyl-[peptide] + formate. Removes the formyl group from the N-terminal Met of newly synthesized proteins. Requires at least a dipeptide for an efficient rate of reaction. N-terminal L-methionine is a prerequisite for activity but the enzyme has broad specificity at other positions. This chain is Peptide deformylase, found in Bradyrhizobium sp. (strain ORS 278).